A 702-amino-acid chain; its full sequence is Cytolytic toxin-beta (702 aa).

Residues 2 to 264 (PSDILVVAAL…EAPQLMADSS (263 aa)) are structural MACPF/CDC pore-forming domain. N-linked (GlcNAc...) asparagine glycans are attached at residues asparagine 94, asparagine 101, and asparagine 286. The tract at residues 265-387 (TPILRKVRNT…DIIEEAKHKV (123 aa)) is structural FAT domain. Positions 388–515 (VLSKSQMARE…PRIPPVETIQ (128 aa)) are thioredoxin (THX) domain. Residues 504–702 (SNPRIPPVET…ANGQIKLKGE (199 aa)) form the B30.2/SPRY domain.

This sequence belongs to the SNTX/VTX toxin family. In terms of assembly, heterodimer of alpha and beta subunits; non-covalently linked. Also associates into tetramers or even higher aggregates. Intrachain disulfide bonds may be present in the heterodimer. As to expression, expressed by the venom gland.

The protein resides in the secreted. In terms of biological role, this heterodimer induces potent hemolytic activities (when tested on rabbit erythrocytes, EC(50)=25-56 ng/mL) due to its ability to form pores in the cell membrane. The pore may be composed of 10 alpha/beta heterodimers. The toxin shows cardiovascular effects that include a vasorelaxant action that may involve the L-arginine-nitric oxid synthase pathway. In addition, it displays edema-inducing activities, increases vascular permeability. It also shows myotoxic activities and interferes irreversibly with neuromuscular function. It also induces irreversible platelet aggregation in rabbit or rat (but not in human or mouse) whole blood. In addition, it has been observed to increase spontaneous quantal acetylcholine release from isolated frog cutaneous pectoris motor endings. This chain is Cytolytic toxin-beta, found in Scorpaena plumieri (Spotted scorpionfish).